The chain runs to 294 residues: Indole-3-glycerol phosphate synthase (294 aa).

The protein belongs to the TrpC family.

The catalysed reaction is 1-(2-carboxyphenylamino)-1-deoxy-D-ribulose 5-phosphate + H(+) = (1S,2R)-1-C-(indol-3-yl)glycerol 3-phosphate + CO2 + H2O. Its pathway is amino-acid biosynthesis; L-tryptophan biosynthesis; L-tryptophan from chorismate: step 4/5. This chain is Indole-3-glycerol phosphate synthase, found in Synechococcus sp. (strain WH7803).